Consider the following 338-residue polypeptide: Ketol-acid reductoisomerase (NADP(+)) (338 aa).

Positions 1–181 (MNVFYDKDAD…GGGRAGIIET (181 aa)) constitute a KARI N-terminal Rossmann domain. Residues 24 to 27 (YGSQ), Arg47, and Ser52 each bind NADP(+). Residue His107 is part of the active site. NADP(+) is bound at residue Gly133. Positions 182 to 327 (NFREETETDL…AKLRAMMPWI (146 aa)) constitute a KARI C-terminal knotted domain. Positions 190, 194, 226, and 230 each coordinate Mg(2+). Ser251 is a substrate binding site.

It belongs to the ketol-acid reductoisomerase family. Mg(2+) serves as cofactor.

It carries out the reaction (2R)-2,3-dihydroxy-3-methylbutanoate + NADP(+) = (2S)-2-acetolactate + NADPH + H(+). It catalyses the reaction (2R,3R)-2,3-dihydroxy-3-methylpentanoate + NADP(+) = (S)-2-ethyl-2-hydroxy-3-oxobutanoate + NADPH + H(+). It participates in amino-acid biosynthesis; L-isoleucine biosynthesis; L-isoleucine from 2-oxobutanoate: step 2/4. The protein operates within amino-acid biosynthesis; L-valine biosynthesis; L-valine from pyruvate: step 2/4. Involved in the biosynthesis of branched-chain amino acids (BCAA). Catalyzes an alkyl-migration followed by a ketol-acid reduction of (S)-2-acetolactate (S2AL) to yield (R)-2,3-dihydroxy-isovalerate. In the isomerase reaction, S2AL is rearranged via a Mg-dependent methyl migration to produce 3-hydroxy-3-methyl-2-ketobutyrate (HMKB). In the reductase reaction, this 2-ketoacid undergoes a metal-dependent reduction by NADPH to yield (R)-2,3-dihydroxy-isovalerate. In Burkholderia lata (strain ATCC 17760 / DSM 23089 / LMG 22485 / NCIMB 9086 / R18194 / 383), this protein is Ketol-acid reductoisomerase (NADP(+)).